The primary structure comprises 661 residues: Peroxisomal acyl-coenzyme A oxidase 1 (661 aa).

S26 is subject to Phosphoserine. At K65 the chain carries N6-acetyllysine. N6-succinyllysine is present on residues K89 and K90. Residue T139 coordinates FAD. The residue at position 159 (K159) is an N6-succinyllysine. FAD is bound at residue G178. At K216 the chain carries N6-acetyllysine. K241 bears the N6-succinyllysine mark. N6-acetyllysine occurs at positions 255, 267, and 272. K349 is subject to N6-succinyllysine. The active-site Proton acceptor is the E421. N6-acetyllysine; alternate occurs at positions 437 and 446. Residues K437 and K446 each carry the N6-succinyllysine; alternate modification. K500 bears the N6-acetyllysine mark. K512 carries the post-translational modification N6-acetyllysine; alternate. At K512 the chain carries N6-succinyllysine; alternate. An N6-succinyllysine modification is found at K542. Position 637 is an N6-acetyllysine; alternate (K637). At K637 the chain carries N6-succinyllysine; alternate. Position 643 is an N6-succinyllysine (K643). A Phosphoserine modification is found at S649. Residue K652 is modified to N6-acetyllysine. K655 is subject to N6-succinyllysine. Residues 659 to 661 (SKL) carry the Microbody targeting signal motif.

Belongs to the acyl-CoA oxidase family. As to quaternary structure, homodimer. The enzyme contains three components A, B and C, the latter two being produced from the first by a proteolytic cleavage. Interacts with LONP2. Requires FAD as cofactor. In terms of tissue distribution, expressed in Schwann cells. Expressed (at protein level) in liver.

The protein localises to the peroxisome. The catalysed reaction is a 2,3-saturated acyl-CoA + O2 = a (2E)-enoyl-CoA + H2O2. It carries out the reaction hexadecanoyl-CoA + O2 = (2E)-hexadecenoyl-CoA + H2O2. It catalyses the reaction dodecanoyl-CoA + O2 = (2E)-dodecenoyl-CoA + H2O2. The enzyme catalyses octanoyl-CoA + O2 = (2E)-octenoyl-CoA + H2O2. The catalysed reaction is decanoyl-CoA + O2 = (2E)-decenoyl-CoA + H2O2. It carries out the reaction tetradecanoyl-CoA + O2 = (2E)-tetradecenoyl-CoA + H2O2. It catalyses the reaction hexadecanedioyl-CoA + O2 = (2E)-hexadecenedioyl-CoA + H2O2. The enzyme catalyses tetracosanoyl-CoA + O2 = (2E)-tetracosenoyl-CoA + H2O2. The catalysed reaction is glutaryl-CoA + O2 = (2E)-glutaconyl-CoA + H2O2. It carries out the reaction hexanoyl-CoA + O2 = (2E)-hexenoyl-CoA + H2O2. It catalyses the reaction octadecanoyl-CoA + O2 = (2E)-octadecenoyl-CoA + H2O2. The enzyme catalyses (5Z,8Z,11Z,14Z,17Z)-eicosapentaenoyl-CoA + O2 = (2E,5Z,8Z,11Z,14Z,17Z)-icosahexaenoyl-CoA + H2O2. The catalysed reaction is (6Z,9Z,12Z,15Z,18Z,21Z)-tetracosahexaenoyl-CoA + O2 = (2E,6Z,9Z,12Z,15Z,18Z,21Z)-tetracosaheptaenoyl-CoA + H2O2. It functions in the pathway lipid metabolism; peroxisomal fatty acid beta-oxidation. In terms of biological role, involved in the initial and rate-limiting step of peroxisomal beta-oxidation of straight-chain saturated and unsaturated very-long-chain fatty acids. Catalyzes the desaturation of fatty acyl-CoAs such as palmitoyl-CoA (hexadecanoyl-CoA) to 2-trans-enoyl-CoAs ((2E)-enoyl-CoAs) such as (2E)-hexadecenoyl-CoA, and donates electrons directly to molecular oxygen (O(2)), thereby producing hydrogen peroxide (H(2)O(2)). Shows highest activity against medium-chain fatty acyl-CoAs. Shows optimum activity with a chain length of 10 carbons (decanoyl-CoA) in vitro. Functionally, is active against a much broader range of substrates and shows activity towards long-chain acyl-CoAs. The protein is Peroxisomal acyl-coenzyme A oxidase 1 of Rattus norvegicus (Rat).